A 109-amino-acid chain; its full sequence is Large ribosomal subunit protein uL24 (109 aa).

Belongs to the universal ribosomal protein uL24 family. In terms of assembly, part of the 50S ribosomal subunit.

One of two assembly initiator proteins, it binds directly to the 5'-end of the 23S rRNA, where it nucleates assembly of the 50S subunit. Functionally, one of the proteins that surrounds the polypeptide exit tunnel on the outside of the subunit. The chain is Large ribosomal subunit protein uL24 from Legionella pneumophila (strain Corby).